Reading from the N-terminus, the 631-residue chain is 30-kDa cleavage and polyadenylation specificity factor 30 (631 aa).

Residues 12 to 38 (EGGLDSGPVQNTASVPVAPPENSSSAA) form a disordered region. C3H1-type zinc fingers lie at residues 60-87 (SFRQTVCRHWLRGLCMKGDACGFLHQFD), 88-112 (KARMPICRFFRLYGECREQDCVYKH), and 114-141 (NEDIKECNMYKLGFCPNGPDCRYRHAKL). Residues 179–234 (QDRPQGQVPMQGQPQESGNLQQQQQQQPQQSQHQVSQTLIPNPADQTNRTSHPLPQ) form a disordered region. Residues 182–215 (PQGQVPMQGQPQESGNLQQQQQQQPQQSQHQVSQ) are compositionally biased toward low complexity. Over residues 216 to 231 (TLIPNPADQTNRTSHP) the composition is skewed to polar residues. The YTH domain occupies 237–372 (NRYFVVKSNN…SVGEQLASLL (136 aa)). Residues 392 to 407 (EEEKAKGVNPESRAEN) are compositionally biased toward basic and acidic residues. Disordered regions lie at residues 392-447 (EEEK…RGIM) and 541-631 (PHMG…KKRR). Residues 412 to 432 (PFEDNEEEEEEEDESEEEEES) show a composition bias toward acidic residues. Basic and acidic residues predominate over residues 573-583 (KTPERSDERGV). 2 positions are modified to phosphoserine: serine 610 and serine 612. Basic residues predominate over residues 621-631 (RSRHGEGKKRR).

It belongs to the CPSF4/YTH1 family. In terms of assembly, component of the cleavage and polyadenylation specificity factor (CPSF) complex. Can form homodimers. Binds to calmodulin. Forms a complex with cleavage and polyadenylation specificity factor (CPSF) subunits CPSF73-I, CPSF73-II, CPSF100, CPSF160, CFIS2, FIPS3, FIPS5, PAPS2, PAPS3, CLPS3, PCFS1, PCFS4, CSTF50 and CSTF77. As to expression, expressed in seedlings, roots, leaves, siliques, stems and flowers.

It localises to the nucleus. The protein localises to the cytoplasm. With respect to regulation, endonuclease activity is repressed by the N-terminal domain of FIPS5. Nuclease activity is inhibited by zinc (&gt;100 uM), cadmium in a progressive manner (50 percent activity at 1 mM Cd(2+)), and high salt levels (e.g. KCl or NaCl &gt;600 mM). Stimulated by ATP in the presence of Zn(2+), even at inhibitory zinc concentrations. Elevated temperatures prevent RNA-binding at 55 degrees Celsius, but endonuclease activity at 70 degrees Celsius. The sulfhydryl reagent dithiothreitol (DTT) inhibits both RNA-binding and nuclease activities. Functionally, component of the cleavage and polyadenylation specificity factor (CPSF) complex that play a key role in pre-mRNA 3'-end formation. May interact with poly(A) polymerase and other factors to bring about cleavage and poly(A) addition. Mediates poly(A) site selection. Binds RNA in a calcium-dependent manner. Exhibits endonuclease activity with an ability to nick and degrade linear as well as circular single-stranded RNA that leaves RNA 3' ends with hydroxyl groups, thus mediating processing of the pre-mRNA as a prelude to the polyadenylation. Involved in the post-transcriptional control, probably via poly(A) addition, of the responses of plants to stress, especially genes mediating tolerance to oxidative stress. Plays a role in the regulation of salicylic acid (SA) production via the control of messenger RNA 3' end processing, thus being a key component of programmed cell death and plant immune responses required for resistance to virulent Pseudomonas syringae pv tomato DC3000 (Pst). The protein is 30-kDa cleavage and polyadenylation specificity factor 30 of Arabidopsis thaliana (Mouse-ear cress).